Reading from the N-terminus, the 125-residue chain is Large ribosomal subunit protein bL20 (125 aa).

Belongs to the bacterial ribosomal protein bL20 family.

Functionally, binds directly to 23S ribosomal RNA and is necessary for the in vitro assembly process of the 50S ribosomal subunit. It is not involved in the protein synthesizing functions of that subunit. The chain is Large ribosomal subunit protein bL20 from Zymomonas mobilis subsp. mobilis (strain ATCC 31821 / ZM4 / CP4).